A 309-amino-acid chain; its full sequence is MDAFQGILKFFLNQKTVIGYSFMALLTVGSERLFSVVAFKCPCSTENMTYGLVFLFAPAWVLLILGFFLNNRSWRLFTGCCVNPRKIFPRGHSCRFFYVLGQITLSSLVAPVMWLSVALLNGTFYECAMSGTRSSGLLELICKGKPKECWEELHKVSCGKTSMLPTVNEELKLSLQAQSQILGWCLICSASFFSLLTTCYARCRSKVSYLQLSFWKTYAQKEKEQLENTFLDYANKLSERNLKCFFENKRPDPFPMPTFAAWEAASELHSFHQSQQHYSTLHRVVDNGLQLSPEDDETTMVLVGTAHNM.

At 1-15 (MDAFQGILKFFLNQK) the chain is on the cytoplasmic side. Residues K15, R32, and V37 each coordinate a 1,2-diacyl-sn-glycero-3-phosphate. A helical membrane pass occupies residues 16 to 37 (TVIGYSFMALLTVGSERLFSVV). Residues 38–45 (AFKCPCST) lie on the Extracellular side of the membrane. 3 disulfide bridges follow: C41/C127, C43/C158, and C142/C149. The helical transmembrane segment at 46 to 70 (ENMTYGLVFLFAPAWVLLILGFFLN) threads the bilayer. The Cytoplasmic segment spans residues 71–99 (NRSWRLFTGCCVNPRKIFPRGHSCRFFYV). The helical transmembrane segment at 100–129 (LGQITLSSLVAPVMWLSVALLNGTFYECAM) threads the bilayer. A 1,2-diacyl-sn-glycero-3-phosphate-binding residues include Q102 and N121. At 130–174 (SGTRSSGLLELICKGKPKECWEELHKVSCGKTSMLPTVNEELKLS) the chain is on the extracellular side. A helical transmembrane segment spans residues 175 to 200 (LQAQSQILGWCLICSASFFSLLTTCY). The Cytoplasmic segment spans residues 201–309 (ARCRSKVSYL…MVLVGTAHNM (109 aa)). Residue R202 participates in a 1,2-diacyl-sn-glycero-3-phosphate binding.

This sequence belongs to the CALHM family. As to quaternary structure, oligomerizes to form undecameric cone-shaped channels.

Its subcellular location is the membrane. Its function is as follows. May assemble to form large pore channels with gating and ion conductance likely regulated by membrane lipids. This is Calcium homeostasis modulator protein 5 from Homo sapiens (Human).